Here is a 242-residue protein sequence, read N- to C-terminus: UPF0246 protein SPP_1571 (242 aa).

Belongs to the UPF0246 family.

The sequence is that of UPF0246 protein SPP_1571 from Streptococcus pneumoniae (strain P1031).